The primary structure comprises 393 residues: 1-deoxy-D-xylulose 5-phosphate reductoisomerase (393 aa).

Residues Thr10, Gly11, Ser12, Ile13, Arg37, Gln38, and Asn124 each contribute to the NADPH site. Lys125 lines the 1-deoxy-D-xylulose 5-phosphate pocket. Glu126 contributes to the NADPH binding site. Asp150 contributes to the Mn(2+) binding site. The 1-deoxy-D-xylulose 5-phosphate site is built by Ser151, Glu152, Ser179, and His202. Position 152 (Glu152) interacts with Mn(2+). Gly208 provides a ligand contact to NADPH. 1-deoxy-D-xylulose 5-phosphate is bound by residues Ser215, Asn220, Lys221, and Glu224. Glu224 is a binding site for Mn(2+).

Belongs to the DXR family. Requires Mg(2+) as cofactor. It depends on Mn(2+) as a cofactor.

The catalysed reaction is 2-C-methyl-D-erythritol 4-phosphate + NADP(+) = 1-deoxy-D-xylulose 5-phosphate + NADPH + H(+). Its pathway is isoprenoid biosynthesis; isopentenyl diphosphate biosynthesis via DXP pathway; isopentenyl diphosphate from 1-deoxy-D-xylulose 5-phosphate: step 1/6. Catalyzes the NADPH-dependent rearrangement and reduction of 1-deoxy-D-xylulose-5-phosphate (DXP) to 2-C-methyl-D-erythritol 4-phosphate (MEP). The protein is 1-deoxy-D-xylulose 5-phosphate reductoisomerase of Cupriavidus taiwanensis (strain DSM 17343 / BCRC 17206 / CCUG 44338 / CIP 107171 / LMG 19424 / R1) (Ralstonia taiwanensis (strain LMG 19424)).